The chain runs to 269 residues: MITTKTVNGVQIAFDDQGHEPGPVFVTLSGWAHDLRAYDGMLPYLRAAQRTVRVCWRGHGPDRNLVGDFGIDEMAADTIGLLDALEVDSFVPIAHAHGGWAALEIADRLGAQRVPAVMILDLIMTPAPREFVAALHGIQDPERWKEGRDGLVQSWLAGTTNQAVLDHVRYDSGGHGFDMWARAGRVIDEAYRTWGSPMRRMEALAEPCAIRHVFSHPKIGEYDALHDDFAARHPWFSYRRLGGETHFPGIELPQQVAAEAIDLLAGARI.

His97 provides a ligand contact to substrate. His246 functions as the Proton donor/acceptor in the catalytic mechanism.

It belongs to the AB hydrolase superfamily. In terms of assembly, monomer.

The catalysed reaction is 2-heptyl-3-hydroxy-4(1H)-quinolone + O2 = N-octanoylanthranilate + CO + H(+). Its function is as follows. Ring-cleaving dioxygenase involved in the degradation pathway of the Pseudomonas aeruginosa quorum sensing signal molecules HHQ (2-heptyl-4-quinolone) and PQS (2-heptyl-3-hydroxy-4(1H)-quinolone) to anthranilate. Catalyzes the cleavage of PQS to form N-octanoylanthranilate and carbon monoxide. Thus, leads to the inactivation of PQS that plays a central role in the regulation of virulence factor production by P.aeruginosa, thereby quenching the production of antimicrobials, which may contribute to the competitiveness of M.abscessus in presence of P.aeruginosa. In vitro, can also use other 2-alkyl-3-hydroxy-4(1H)-quinolone (AHQ) substrates with shorter alkyl substituents at C2, but with lower efficiency. This is 2-heptyl-3-hydroxy-4(1H)-quinolone dioxygenase from Mycobacteroides abscessus (strain ATCC 19977 / DSM 44196 / CCUG 20993 / CIP 104536 / JCM 13569 / NCTC 13031 / TMC 1543 / L948) (Mycobacterium abscessus).